The following is a 317-amino-acid chain: Flagellar hook-associated protein 3 (317 aa).

Belongs to the bacterial flagellin family.

It is found in the secreted. The protein localises to the bacterial flagellum. In Salmonella typhimurium (strain LT2 / SGSC1412 / ATCC 700720), this protein is Flagellar hook-associated protein 3 (flgL).